The sequence spans 408 residues: Elongation factor Tu, chloroplastic (408 aa).

Residues 10–214 (KPHVNIGTIG…AVDSYIPTPK (205 aa)) form the tr-type G domain. The G1 stretch occupies residues 19–26 (GHVDHGKT). 19–26 (GHVDHGKT) is a binding site for GTP. Thr-26 is a binding site for Mg(2+). The segment at 60-64 (GITIN) is G2. The segment at 81-84 (DCPG) is G3. Residues 81-85 (DCPGH) and 136-139 (NKED) each bind GTP. The G4 stretch occupies residues 136-139 (NKED). Residues 174–176 (SAL) form a G5 region.

Belongs to the TRAFAC class translation factor GTPase superfamily. Classic translation factor GTPase family. EF-Tu/EF-1A subfamily.

The protein localises to the plastid. Its subcellular location is the chloroplast. The catalysed reaction is GTP + H2O = GDP + phosphate + H(+). Functionally, GTP hydrolase that promotes the GTP-dependent binding of aminoacyl-tRNA to the A-site of ribosomes during protein biosynthesis. This is Elongation factor Tu, chloroplastic (tufA) from Chara connivens (Convergent stonewort).